Consider the following 103-residue polypeptide: Iron-sulfur cluster assembly protein CyaY (103 aa).

The protein belongs to the frataxin family.

Involved in iron-sulfur (Fe-S) cluster assembly. May act as a regulator of Fe-S biogenesis. The polypeptide is Iron-sulfur cluster assembly protein CyaY (Rickettsia rickettsii (strain Iowa)).